Consider the following 341-residue polypeptide: Ribulose-5-phosphate reductase 2 (341 aa).

4 residues coordinate Zn(2+): Cys38, His64, Glu65, and Glu144.

The protein belongs to the zinc-containing alcohol dehydrogenase family. As to quaternary structure, heterodimer together with TarI. Requires Zn(2+) as cofactor.

The enzyme catalyses D-ribitol 5-phosphate + NADP(+) = D-ribulose 5-phosphate + NADPH + H(+). Its pathway is cell wall biogenesis; poly(ribitol phosphate) teichoic acid biosynthesis. Its function is as follows. Catalyzes the NADPH dependent reduction of D-ribulose 5-phosphate to D-ribitol 5-phosphate. This chain is Ribulose-5-phosphate reductase 2, found in Staphylococcus aureus (strain NCTC 8325 / PS 47).